The sequence spans 469 residues: MTRYEVVFIAIPTLGNLVPQVEFANLLTKHDPRFSATILTVSMPQRPLMNTYVQARASSAANIKLLQLPIVDPPAPEQYQTLVGFLSLHMQNHKHHVKHALLNLMKTTESNSSNSVRLAAIFVDMFSTTLIDVAAELAVPCYLFFASPASCLGFTLDLPRFDLAESKSEFTVPCFKNLLPRSVFPNLVLDAKDGTFWLSYHARRYKETKGIVINTLQELETHALQSLHNDSQLQRVYPIGPILDLVGSAQWDPNPAQYKRIMEWLDQQPLSSVVLLCFGSMGSLEANQVEEIAIGLERAGVRFLWALRESPKAQLEYPRDYENHKDVLPDGFLERTNNIGLVCGWVPQAVVLAHKAVGGFVSHCGWNSILESLWHGVPVATWPLYSEQQMNAFQMVRDLGLAVEISVDYRVGADLVRAEEVENGLRSLMKGGDEIRRKVKEMSDTCRGALLENGSSYSNLVSLIQELTS.

UDP-alpha-D-glucose is bound by residues Ser280, 345-346, 363-371, and 385-388; these read WV, HCGWNSILE, and YSEQ.

This sequence belongs to the UDP-glycosyltransferase family.

Inhibited by Cu(2+) or Zn(2+). In terms of biological role, glycosyltransferase that catalyzes the C-glucosylation of daidzein to puerarin. Shows activity with the isoflavones daidzein and genistein, but has no activity towards flavonoids such as 2-hydroxynaringenin. Can use UDP-glucose, but not UDP-galactose or UDP-glucuronic acid as sugar donor. Does not require bivalent cations for activity. In Pueraria montana var. lobata (Kudzu vine), this protein is UDP-glycosyltransferase 43.